The sequence spans 90 residues: MLKKQFIVYGLVQGVGFRYFTWKTAMQIGVKGYVRNRDDGSVEVVAVGSTTQLAQLHTWLTQGPRTASVEQVIEQEYADSREFTDFSVRY.

Residues Lys3–Tyr90 enclose the Acylphosphatase-like domain. Residues Arg18 and Asn36 contribute to the active site.

This sequence belongs to the acylphosphatase family.

The catalysed reaction is an acyl phosphate + H2O = a carboxylate + phosphate + H(+). This chain is Acylphosphatase (acyP), found in Pasteurella multocida (strain Pm70).